The following is a 462-amino-acid chain: Bindin (462 aa).

Positions M1–A19 are cleaved as a signal peptide. Positions E20–R244 are excised as a propeptide. Disordered stretches follow at residues D155–D194 and R221–G278. Residues L372–N380 are fucose-binding domain.

This sequence belongs to the bindin family.

The protein resides in the cytoplasmic vesicle. It localises to the secretory vesicle. The protein localises to the acrosome lumen. Species-specific sea urchin sperm protein required for adhesion of sperm to the egg surface during fertilization. Bindin coats the acrosomal process after it is externalized by the acrosome reaction. It binds to sulfated, fucose-containing polysaccharides on the vitelline layer receptor proteoglycans which cover the egg plasma membrane. The sequence is that of Bindin from Lytechinus variegatus (Green sea urchin).